The sequence spans 181 residues: 6,7-dimethyl-8-ribityllumazine synthase (181 aa).

5-amino-6-(D-ribitylamino)uracil contacts are provided by residues Tyr-27, 58–60, and 87–89; these read ALE and CVI. (2S)-2-hydroxy-3-oxobutyl phosphate is bound at residue 92–93; it reads ET. The Proton donor role is filled by His-95. Asn-120 provides a ligand contact to 5-amino-6-(D-ribitylamino)uracil. (2S)-2-hydroxy-3-oxobutyl phosphate is bound at residue Arg-134.

Belongs to the DMRL synthase family.

The enzyme catalyses (2S)-2-hydroxy-3-oxobutyl phosphate + 5-amino-6-(D-ribitylamino)uracil = 6,7-dimethyl-8-(1-D-ribityl)lumazine + phosphate + 2 H2O + H(+). The protein operates within cofactor biosynthesis; riboflavin biosynthesis; riboflavin from 2-hydroxy-3-oxobutyl phosphate and 5-amino-6-(D-ribitylamino)uracil: step 1/2. Catalyzes the formation of 6,7-dimethyl-8-ribityllumazine by condensation of 5-amino-6-(D-ribitylamino)uracil with 3,4-dihydroxy-2-butanone 4-phosphate. This is the penultimate step in the biosynthesis of riboflavin. This Methylobacterium sp. (strain 4-46) protein is 6,7-dimethyl-8-ribityllumazine synthase.